We begin with the raw amino-acid sequence, 964 residues long: Protein translocase subunit SecA (964 aa).

Residues Gln-86, 104–108 (GEGKT), and Asp-494 each bind ATP. A disordered region spans residues 848–964 (AESADTIAVA…YKMCHGQNEK (117 aa)). Acidic residues predominate over residues 871–882 (AEGEVEEEDEDT). Low complexity predominate over residues 889-900 (AESAAASGAGES). Zn(2+) contacts are provided by Cys-947, Cys-949, Cys-958, and His-959.

It belongs to the SecA family. As to quaternary structure, monomer and homodimer. Part of the essential Sec protein translocation apparatus which comprises SecA, SecYEG and auxiliary proteins SecDF. Other proteins may also be involved. Zn(2+) serves as cofactor.

It is found in the cell membrane. The protein localises to the cytoplasm. It catalyses the reaction ATP + H2O + cellular proteinSide 1 = ADP + phosphate + cellular proteinSide 2.. Its function is as follows. Part of the Sec protein translocase complex. Interacts with the SecYEG preprotein conducting channel. Has a central role in coupling the hydrolysis of ATP to the transfer of proteins into and across the cell membrane, serving as an ATP-driven molecular motor driving the stepwise translocation of polypeptide chains across the membrane. This chain is Protein translocase subunit SecA, found in Bifidobacterium longum (strain DJO10A).